Here is a 359-residue protein sequence, read N- to C-terminus: Peptide chain release factor 1 (359 aa).

An N5-methylglutamine modification is found at Gln233.

The protein belongs to the prokaryotic/mitochondrial release factor family. Methylated by PrmC. Methylation increases the termination efficiency of RF1.

The protein localises to the cytoplasm. In terms of biological role, peptide chain release factor 1 directs the termination of translation in response to the peptide chain termination codons UAG and UAA. This chain is Peptide chain release factor 1, found in Ruminiclostridium cellulolyticum (strain ATCC 35319 / DSM 5812 / JCM 6584 / H10) (Clostridium cellulolyticum).